We begin with the raw amino-acid sequence, 164 residues long: Phosphopantetheine adenylyltransferase (164 aa).

A substrate-binding site is contributed by threonine 14. ATP is bound by residues 14–15 and histidine 22; that span reads TF. Residues lysine 46, methionine 78, and arginine 92 each contribute to the substrate site. ATP-binding positions include 93–95, glutamate 103, and 128–134; these read GLR and HAFISST.

It belongs to the bacterial CoaD family. Homohexamer. Requires Mg(2+) as cofactor.

It is found in the cytoplasm. The enzyme catalyses (R)-4'-phosphopantetheine + ATP + H(+) = 3'-dephospho-CoA + diphosphate. The protein operates within cofactor biosynthesis; coenzyme A biosynthesis; CoA from (R)-pantothenate: step 4/5. Its function is as follows. Reversibly transfers an adenylyl group from ATP to 4'-phosphopantetheine, yielding dephospho-CoA (dPCoA) and pyrophosphate. This Vibrio vulnificus (strain CMCP6) protein is Phosphopantetheine adenylyltransferase.